Reading from the N-terminus, the 153-residue chain is Small ribosomal subunit protein bS6 (153 aa).

Residues 94 to 153 (EAHEEGPSAMMQKRDRDDRPRRDGDRPDRGDRGDRGDRGPREGGRESFGDRPRRPREDRA) are disordered.

It belongs to the bacterial ribosomal protein bS6 family.

Functionally, binds together with bS18 to 16S ribosomal RNA. The chain is Small ribosomal subunit protein bS6 from Allorhizobium ampelinum (strain ATCC BAA-846 / DSM 112012 / S4) (Agrobacterium vitis (strain S4)).